The sequence spans 296 residues: Protoheme IX farnesyltransferase (296 aa).

9 helical membrane-spanning segments follow: residues 9 to 29 (VTKP…FLLA), 36 to 56 (YPLF…GCVF), 75 to 95 (VLVK…VLGI), 99 to 119 (LLLY…GFVI), 133 to 153 (VYGT…GYCA), 163 to 183 (LILL…IAIF), 209 to 229 (ITLY…SGYA), 234 to 254 (LVVA…GYKA), and 265 to 285 (FVFS…DFNV).

This sequence belongs to the UbiA prenyltransferase family. Protoheme IX farnesyltransferase subfamily.

It localises to the cell inner membrane. It carries out the reaction heme b + (2E,6E)-farnesyl diphosphate + H2O = Fe(II)-heme o + diphosphate. The protein operates within porphyrin-containing compound metabolism; heme O biosynthesis; heme O from protoheme: step 1/1. Its function is as follows. Converts heme B (protoheme IX) to heme O by substitution of the vinyl group on carbon 2 of heme B porphyrin ring with a hydroxyethyl farnesyl side group. The chain is Protoheme IX farnesyltransferase from Yersinia pestis bv. Antiqua (strain Antiqua).